Reading from the N-terminus, the 476-residue chain is Aspartyl/glutamyl-tRNA(Asn/Gln) amidotransferase subunit B (476 aa).

Belongs to the GatB/GatE family. GatB subfamily. As to quaternary structure, heterotrimer of A, B and C subunits.

The catalysed reaction is L-glutamyl-tRNA(Gln) + L-glutamine + ATP + H2O = L-glutaminyl-tRNA(Gln) + L-glutamate + ADP + phosphate + H(+). It catalyses the reaction L-aspartyl-tRNA(Asn) + L-glutamine + ATP + H2O = L-asparaginyl-tRNA(Asn) + L-glutamate + ADP + phosphate + 2 H(+). Its function is as follows. Allows the formation of correctly charged Asn-tRNA(Asn) or Gln-tRNA(Gln) through the transamidation of misacylated Asp-tRNA(Asn) or Glu-tRNA(Gln) in organisms which lack either or both of asparaginyl-tRNA or glutaminyl-tRNA synthetases. The reaction takes place in the presence of glutamine and ATP through an activated phospho-Asp-tRNA(Asn) or phospho-Glu-tRNA(Gln). The sequence is that of Aspartyl/glutamyl-tRNA(Asn/Gln) amidotransferase subunit B from Clostridium botulinum (strain 657 / Type Ba4).